Here is a 400-residue protein sequence, read N- to C-terminus: Elongation factor Tu (400 aa).

The tr-type G domain occupies 10-209 (KPHVNVGTIG…AVDSYIPTPE (200 aa)). The interval 19-26 (GHVDHGKT) is G1. Position 19 to 26 (19 to 26 (GHVDHGKT)) interacts with GTP. Mg(2+) is bound at residue Thr26. The G2 stretch occupies residues 60-64 (GITIA). The interval 81–84 (DCPG) is G3. GTP contacts are provided by residues 81 to 85 (DCPGH) and 136 to 139 (NKVD). The segment at 136 to 139 (NKVD) is G4. Positions 174–176 (SAL) are G5.

This sequence belongs to the TRAFAC class translation factor GTPase superfamily. Classic translation factor GTPase family. EF-Tu/EF-1A subfamily. Monomer.

The protein localises to the cytoplasm. The catalysed reaction is GTP + H2O = GDP + phosphate + H(+). Its function is as follows. GTP hydrolase that promotes the GTP-dependent binding of aminoacyl-tRNA to the A-site of ribosomes during protein biosynthesis. In Moorella thermoacetica (strain ATCC 39073 / JCM 9320), this protein is Elongation factor Tu.